Consider the following 266-residue polypeptide: Glioma pathogenesis-related protein 1 (266 aa).

The N-terminal stretch at methionine 1–threonine 21 is a signal peptide. Residues valine 38–tyrosine 175 form the SCP domain. The chain crosses the membrane as a helical span at residues tyrosine 233 to valine 255.

The protein belongs to the CRISP family. As to expression, according to PubMed:8973356, it is ubiquitously expressed with high levels in lung and kidney and low levels in heart and liver. Highly expressed in cell lines derived from nervous system tumors arising from glia, low or absent in non-glial-derived nervous system tumor cell lines. Also found in fetal kidney. According to PubMed:7607567 it is expressed only in brain tumor glioblastoma multiforme/astrocytoma and not in other nervous system tumors or normal fetal or adult tissues.

It localises to the membrane. The sequence is that of Glioma pathogenesis-related protein 1 (GLIPR1) from Homo sapiens (Human).